Here is a 396-residue protein sequence, read N- to C-terminus: Jacalin-related lectin 45 (396 aa).

3 Jacalin-type lectin domains span residues Lys3–His138, Gln144–Val264, and Val270–Pro392.

The protein belongs to the jacalin lectin family.

The polypeptide is Jacalin-related lectin 45 (JAL45) (Arabidopsis thaliana (Mouse-ear cress)).